A 381-amino-acid polypeptide reads, in one-letter code: 5-cytosine rRNA methyltransferase NSUN4 (381 aa).

The N-terminal 25 residues, 1 to 25, are a transit peptide targeting the mitochondrion; that stretch reads MAAPVLRCVRKLLKLVDFTPVPRRY. Positions 182, 183, 184, and 201 each coordinate S-adenosyl-L-methionine. Phosphoserine is present on S203. S-adenosyl-L-methionine is bound by residues R206, D234, G235, and D252. C307 (nucleophile) is an active-site residue.

This sequence belongs to the class I-like SAM-binding methyltransferase superfamily. RsmB/NOP family. In terms of assembly, heterodimer with MTERFD2/MTERF4; this interaction seems to be required for NSUN4 recruitment to the mitochondrial large ribosomal subunit.

The protein localises to the mitochondrion. It catalyses the reaction a cytidine in rRNA + S-adenosyl-L-methionine = a 5-methylcytidine in rRNA + S-adenosyl-L-homocysteine + H(+). The enzyme catalyses a cytidine in mRNA + S-adenosyl-L-methionine = a 5-methylcytidine in mRNA + S-adenosyl-L-homocysteine + H(+). Mitochondrial RNA cytosine C(5)-methyltransferase that methylates cytosine to 5-methylcytosine (m5C) in various RNAs, such as rRNAs, mRNAs and some long non-coding RNAs (lncRNAs). Involved in mitochondrial ribosome small subunit (SSU) maturation by catalyzing methylation of mitochondrial 12S rRNA; the function is independent of MTERFD2/MTERF4 and assembled mitochondrial ribosome large subunit (LSU). Targeted to LSU by MTERFD2/MTERF4 and probably is involved in a final step in ribosome biogenesis to ensure that SSU and LSU are assembled. In vitro can methylate 16S rRNA of the LSU; the methylation is enhanced by MTERFD/MTERF4. Also acts as a regulator of innate immunity by marking double-stranded mitochondrial RNAs(mt-dsRNAs) generated in response to stress: catalyzes m5C modification on mitochondrial RNAs, such as a mRNAs and lncRNAs, with a preference for the termini of light-strand lncRNAs, promoting their degradation and cytosolic release. Modified light-strand lncRNAs are then recognized by C1QBP reader and recruited to the mitochondrial degradosome complex, which promotes their degradation. The sequence is that of 5-cytosine rRNA methyltransferase NSUN4 from Mus musculus (Mouse).